The sequence spans 89 residues: Small ribosomal subunit protein uS15 (89 aa).

This sequence belongs to the universal ribosomal protein uS15 family. In terms of assembly, part of the 30S ribosomal subunit. Forms a bridge to the 50S subunit in the 70S ribosome, contacting the 23S rRNA.

One of the primary rRNA binding proteins, it binds directly to 16S rRNA where it helps nucleate assembly of the platform of the 30S subunit by binding and bridging several RNA helices of the 16S rRNA. In terms of biological role, forms an intersubunit bridge (bridge B4) with the 23S rRNA of the 50S subunit in the ribosome. The chain is Small ribosomal subunit protein uS15 from Roseiflexus castenholzii (strain DSM 13941 / HLO8).